The sequence spans 350 residues: Small ribosomal subunit biogenesis GTPase RsgA (350 aa).

Positions 1–17 are enriched in polar residues; that stretch reads MSKNKLSKGQQRRVNAN. The segment at 1-33 is disordered; the sequence is MSKNKLSKGQQRRVNANHQRRLKTSKEKPDYDD. The CP-type G domain occupies 104 to 273; the sequence is TSVLTRPDFY…VIDSPGVREF (170 aa). GTP contacts are provided by residues 160-163 and 214-222; these read NKID and GQSGVGKSS. Zn(2+)-binding residues include Cys-297, Cys-302, His-304, and Cys-310.

Belongs to the TRAFAC class YlqF/YawG GTPase family. RsgA subfamily. As to quaternary structure, monomer. Associates with 30S ribosomal subunit, binds 16S rRNA. Zn(2+) is required as a cofactor.

Its subcellular location is the cytoplasm. Functionally, one of several proteins that assist in the late maturation steps of the functional core of the 30S ribosomal subunit. Helps release RbfA from mature subunits. May play a role in the assembly of ribosomal proteins into the subunit. Circularly permuted GTPase that catalyzes slow GTP hydrolysis, GTPase activity is stimulated by the 30S ribosomal subunit. This chain is Small ribosomal subunit biogenesis GTPase RsgA, found in Shigella flexneri.